The sequence spans 575 residues: Adenine deaminase 1 (575 aa).

It belongs to the metallo-dependent hydrolases superfamily. Adenine deaminase family. Mn(2+) serves as cofactor.

The enzyme catalyses adenine + H2O + H(+) = hypoxanthine + NH4(+). The protein is Adenine deaminase 1 of Agrobacterium fabrum (strain C58 / ATCC 33970) (Agrobacterium tumefaciens (strain C58)).